The following is a 446-amino-acid chain: Probable D-serine dehydratase (446 aa).

Position 116 is an N6-(pyridoxal phosphate)lysine (K116).

This sequence belongs to the serine/threonine dehydratase family. DsdA subfamily. Requires pyridoxal 5'-phosphate as cofactor.

It catalyses the reaction D-serine = pyruvate + NH4(+). This Bacillus thuringiensis subsp. konkukian (strain 97-27) protein is Probable D-serine dehydratase.